The primary structure comprises 469 residues: Alpha-galactosidase (469 aa).

The signal sequence occupies residues 1-17 (MFPFFFALFFSSTDVLA). Cysteines 41 and 73 form a disulfide. 2 residues coordinate substrate: Asp71 and Asp72. A glycan (N-linked (GlcNAc...) asparagine) is linked at Asn81. A disulfide bridge connects residues Cys120 and Cys150. Lys146 serves as a coordination point for substrate. The active-site Nucleophile is the Asp148. The N-linked (GlcNAc...) asparagine glycan is linked to Asn174. Arg204 is a binding site for substrate. Asp208 serves as the catalytic Proton donor. 2 cysteine pairs are disulfide-bonded: Cys220/Cys236 and Cys222/Cys229. Gln250 lines the substrate pocket. Asn269, Asn369, Asn402, Asn412, Asn421, Asn426, and Asn434 each carry an N-linked (GlcNAc...) asparagine glycan.

The protein belongs to the glycosyl hydrolase 27 family. In terms of assembly, homotetramer.

It is found in the secreted. It catalyses the reaction Hydrolysis of terminal, non-reducing alpha-D-galactose residues in alpha-D-galactosides, including galactose oligosaccharides, galactomannans and galactolipids.. This Lachancea cidri (Yeast) protein is Alpha-galactosidase (MEL).